The chain runs to 784 residues: DNA ligase (784 aa).

Residues 31–35 (DAEYD), 80–81 (SL), and glutamate 120 each bind NAD(+). Lysine 122 functions as the N6-AMP-lysine intermediate in the catalytic mechanism. NAD(+) contacts are provided by arginine 143, glutamate 180, lysine 296, and lysine 320. Residues cysteine 414, cysteine 417, cysteine 444, and cysteine 450 each contribute to the Zn(2+) site. One can recognise a BRCT domain in the interval 701–784 (AEGLPLAGQT…AFMAEQGITL (84 aa)).

It belongs to the NAD-dependent DNA ligase family. LigA subfamily. Requires Mg(2+) as cofactor. The cofactor is Mn(2+).

It catalyses the reaction NAD(+) + (deoxyribonucleotide)n-3'-hydroxyl + 5'-phospho-(deoxyribonucleotide)m = (deoxyribonucleotide)n+m + AMP + beta-nicotinamide D-nucleotide.. DNA ligase that catalyzes the formation of phosphodiester linkages between 5'-phosphoryl and 3'-hydroxyl groups in double-stranded DNA using NAD as a coenzyme and as the energy source for the reaction. It is essential for DNA replication and repair of damaged DNA. The chain is DNA ligase from Pseudomonas entomophila (strain L48).